The chain runs to 162 residues: Mitochondrial intermembrane space import and assembly protein 40 homolog (162 aa).

Residues 1-61 form a disordered region; the sequence is MGQAQSDENS…DNENESLEAK (61 aa). Residues 9–18 are compositionally biased toward low complexity; that stretch reads NSIPTTTTTN. Cystine bridges form between C68-C70, C79-C112, and C89-C102. One can recognise a CHCH domain in the interval 76 to 120; that stretch reads NGSCGSQFSEAFLCFLKSTAEEKGSDCVNPFVALQSCINANPDAF. Short sequence motifs (cx9C motif) lie at residues 79 to 89 and 102 to 112; these read CGSQFSEAFLC and CVNPFVALQSC. A disordered region spans residues 119–162; sequence AFSKSVTGDEKETEKKEEQPPVQDHRIIPPLWAKDPPRSGNSKL. Residues 125 to 145 are compositionally biased toward basic and acidic residues; that stretch reads TGDEKETEKKEEQPPVQDHRI.

Its subcellular location is the mitochondrion intermembrane space. It localises to the peroxisome matrix. Required for the import and folding of small cysteine-containing proteins in the mitochondrial intermembrane space. Involved in the mitochondrial oxidative folding of the copper-zinc superoxide dismutase CSD1, the copper chaperone for superoxide dismutase CCS, and subunits of the mitochondrial membrane respiratory chain NADH dehydrogenase (Complex I). Involved in the peroxisomal oxidative folding of the copper-zinc superoxide dismutase CSD3, and the fatty acid beta-oxidation multifunctional protein AIM1. The chain is Mitochondrial intermembrane space import and assembly protein 40 homolog from Arabidopsis thaliana (Mouse-ear cress).